The primary structure comprises 264 residues: Thiazole synthase (264 aa).

Catalysis depends on K101, which acts as the Schiff-base intermediate with DXP. Residues G162, 189 to 190 (AG), and 211 to 212 (NT) contribute to the 1-deoxy-D-xylulose 5-phosphate site. Positions 245 to 264 (KRQTASPSTPTLGQPFWHNQ) are disordered.

This sequence belongs to the ThiG family. In terms of assembly, homotetramer. Forms heterodimers with either ThiH or ThiS.

It localises to the cytoplasm. It carries out the reaction [ThiS sulfur-carrier protein]-C-terminal-Gly-aminoethanethioate + 2-iminoacetate + 1-deoxy-D-xylulose 5-phosphate = [ThiS sulfur-carrier protein]-C-terminal Gly-Gly + 2-[(2R,5Z)-2-carboxy-4-methylthiazol-5(2H)-ylidene]ethyl phosphate + 2 H2O + H(+). The protein operates within cofactor biosynthesis; thiamine diphosphate biosynthesis. Catalyzes the rearrangement of 1-deoxy-D-xylulose 5-phosphate (DXP) to produce the thiazole phosphate moiety of thiamine. Sulfur is provided by the thiocarboxylate moiety of the carrier protein ThiS. In vitro, sulfur can be provided by H(2)S. This chain is Thiazole synthase, found in Cellvibrio japonicus (strain Ueda107) (Pseudomonas fluorescens subsp. cellulosa).